The sequence spans 512 residues: 3-ketoacyl-CoA synthase 9 (512 aa).

The next 2 membrane-spanning stretches (helical) occupy residues 44-64 and 83-103; these read LITH…VTEI and LVAF…YIMS. Residues 100–389 form the FAE domain; the sequence is YIMSRPRSVY…FFMTLVTKKL (290 aa). Catalysis depends on residues cysteine 244, histidine 323, histidine 407, histidine 411, histidine 440, and asparagine 444.

It belongs to the thiolase-like superfamily. Chalcone/stilbene synthases family. As to expression, expressed in seedlings, stems, leaves, flowers and siliques. Expressed in roots, leaves, and stems, including epidermis, silique walls, sepals, the upper portion of the styles, and seed coats, but not in developing embryos.

It is found in the endoplasmic reticulum membrane. It carries out the reaction a very-long-chain acyl-CoA + malonyl-CoA + H(+) = a very-long-chain 3-oxoacyl-CoA + CO2 + CoA. The protein operates within lipid metabolism; fatty acid biosynthesis. Involved in the elongation of C22 to C24 fatty acids, which are precursors for the biosynthesis of cuticular waxes, aliphatic suberins, and membrane lipids, including sphingolipids and phospholipids. The chain is 3-ketoacyl-CoA synthase 9 from Arabidopsis thaliana (Mouse-ear cress).